The sequence spans 631 residues: Methanol dehydrogenase [cytochrome c] subunit 1 (631 aa).

An N-terminal signal peptide occupies residues methionine 1–alanine 32. Cysteine 135 and cysteine 136 form a disulfide bridge. Ca(2+) contacts are provided by glutamate 209 and asparagine 293. The active-site Proton acceptor is the aspartate 335. A disulfide bond links cysteine 418 and cysteine 447.

Belongs to the bacterial PQQ dehydrogenase family. In terms of assembly, heterotetramer composed of 2 alpha and 2 beta subunits. Pyrroloquinoline quinone is required as a cofactor. The cofactor is Ca(2+).

Its subcellular location is the periplasm. It carries out the reaction 2 Fe(III)-[cytochrome cL] + a primary alcohol = 2 Fe(II)-[cytochrome cL] + an aldehyde + 2 H(+). In terms of biological role, catalyzes the oxidation of primary alcohols including methanol. The chain is Methanol dehydrogenase [cytochrome c] subunit 1 (moxF) from Paracoccus denitrificans.